Consider the following 311-residue polypeptide: DNA replication terminus site-binding protein (311 aa).

Belongs to the Tus family.

It is found in the cytoplasm. Functionally, trans-acting protein required for termination of DNA replication. Binds to DNA replication terminator sequences (terA to terF) to prevent the passage of replication forks. The termination efficiency will be affected by the affinity of this protein for the terminator sequence. The sequence is that of DNA replication terminus site-binding protein from Yersinia pestis.